Here is an 87-residue protein sequence, read N- to C-terminus: Conotoxin QcMNCL-XIII0.1 (87 aa).

A signal peptide spans 1-18 (MNCLQLLLVLLLISTIAA). The propeptide occupies 19-34 (LHGDGRVPQRRGRNIR).

In terms of processing, contains 4 disulfide bonds. Expressed by the venom duct.

It localises to the secreted. In terms of biological role, may interact and inhibit Cav3.1/CACNA1G calcium channels. In a ex vivo model, shows ability to block nerve signal transduction. The sequence is that of Conotoxin QcMNCL-XIII0.1 from Conus quercinus (Oak cone).